The sequence spans 157 residues: Mediator of RNA polymerase II transcription subunit 22 (157 aa).

It belongs to the Mediator complex subunit 22 family. Component of the Mediator complex.

It is found in the nucleus. Functionally, component of the Mediator complex, a coactivator involved in the regulated transcription of nearly all RNA polymerase II-dependent genes. Mediator functions as a bridge to convey information from gene-specific regulatory proteins to the basal RNA polymerase II transcription machinery. Mediator is recruited to promoters by direct interactions with regulatory proteins and serves as a scaffold for the assembly of a functional preinitiation complex with RNA polymerase II and the general transcription factors. The sequence is that of Mediator of RNA polymerase II transcription subunit 22 (mdt-22) from Caenorhabditis elegans.